Consider the following 429-residue polypeptide: Glucan 1,3-beta-glucosidase (429 aa).

The first 19 residues, 1-19 (MLSMQVVSLISLLVSVCLA), serve as a signal peptide directing secretion. Positions 20–27 (QPLPLSKR) are excised as a propeptide. The Proton donor role is filled by Glu-215. 2 disulfides stabilise this stretch: Cys-299-Cys-425 and Cys-324-Cys-354. Glu-316 functions as the Nucleophile in the catalytic mechanism.

Belongs to the glycosyl hydrolase 5 (cellulase A) family.

It localises to the secreted. The catalysed reaction is Successive hydrolysis of beta-D-glucose units from the non-reducing ends of (1-&gt;3)-beta-D-glucans, releasing alpha-glucose.. In terms of biological role, beta-glucanases participate in the metabolism of beta-glucan, the main structural component of the cell wall. It could also function biosynthetically as a transglycosylase. This chain is Glucan 1,3-beta-glucosidase, found in Kluyveromyces lactis (strain ATCC 8585 / CBS 2359 / DSM 70799 / NBRC 1267 / NRRL Y-1140 / WM37) (Yeast).